The sequence spans 257 residues: Adenosylcobinamide-GDP ribazoletransferase (257 aa).

A run of 6 helical transmembrane segments spans residues glutamine 7–valine 27, arginine 39–threonine 59, glycine 61–glycine 81, isoleucine 113–serine 133, valine 143–phenylalanine 163, and valine 196–leucine 216.

Belongs to the CobS family. It depends on Mg(2+) as a cofactor.

The protein resides in the cell inner membrane. It carries out the reaction alpha-ribazole + adenosylcob(III)inamide-GDP = adenosylcob(III)alamin + GMP + H(+). The catalysed reaction is alpha-ribazole 5'-phosphate + adenosylcob(III)inamide-GDP = adenosylcob(III)alamin 5'-phosphate + GMP + H(+). It participates in cofactor biosynthesis; adenosylcobalamin biosynthesis; adenosylcobalamin from cob(II)yrinate a,c-diamide: step 7/7. In terms of biological role, joins adenosylcobinamide-GDP and alpha-ribazole to generate adenosylcobalamin (Ado-cobalamin). Also synthesizes adenosylcobalamin 5'-phosphate from adenosylcobinamide-GDP and alpha-ribazole 5'-phosphate. The chain is Adenosylcobinamide-GDP ribazoletransferase from Shewanella woodyi (strain ATCC 51908 / MS32).